The following is a 594-amino-acid chain: Tyrosine-protein kinase RYK (594 aa).

The N-terminal stretch at 1–34 is a signal peptide; sequence MRAGRGGVPGSGGLRAPPPPLLLLLLAMLPAAAP. Residues 35-211 lie on the Extracellular side of the membrane; sequence RSPALAAAPA…VHAAPTTSTR (177 aa). One can recognise a WIF domain in the interval 50–178; the sequence is LYLSEDEVRR…VLNFKRRKMC (129 aa). Asn123, Asn158, Asn162, Asn166, and Asn193 each carry an N-linked (GlcNAc...) asparagine glycan. Residues 212–239 traverse the membrane as a helical segment; that stretch reads VFYISVGVCCAVIFLVAIILAVLHLHSM. Residues 240 to 594 lie on the Cytoplasmic side of the membrane; sequence KRIELDDSIS…EFHAALGAYV (355 aa). Residues 250–266 show a composition bias toward low complexity; it reads ASSSSQGLSQPSTQTTQ. Positions 250–283 are disordered; that stretch reads ASSSSQGLSQPSTQTTQYLRADTPNNATPITSSS. Residues 272 to 283 show a composition bias toward polar residues; sequence TPNNATPITSSS. One can recognise a Protein kinase domain in the interval 317–590; that stretch reads ITLKDVLQEG…QCLTEFHAAL (274 aa). ATP is bound by residues 323–331 and Lys351; that span reads LQEGTFGRI. Catalysis depends on Asp452, which acts as the Proton acceptor. The residue at position 482 (Tyr482) is a Phosphotyrosine; by autocatalysis.

Belongs to the protein kinase superfamily. Tyr protein kinase family. As to quaternary structure, interacts with DVL1 (via PDZ domain). In terms of processing, proteolytically cleaved, in part by presenilin, in response to WNT3 stimulation. Is detected in all the tissues. Highest levels are seen in the ovary, lung and placenta.

It localises to the membrane. The protein localises to the nucleus. The protein resides in the cytoplasm. It carries out the reaction L-tyrosyl-[protein] + ATP = O-phospho-L-tyrosyl-[protein] + ADP + H(+). May be a coreceptor along with FZD8 of Wnt proteins, such as WNT1, WNT3, WNT3A and WNT5A. Involved in neuron differentiation, axon guidance, corpus callosum establishment and neurite outgrowth. In response to WNT3 stimulation, receptor C-terminal cleavage occurs in its transmembrane region and allows the C-terminal intracellular product to translocate from the cytoplasm to the nucleus where it plays a crucial role in neuronal development. In Mus musculus (Mouse), this protein is Tyrosine-protein kinase RYK (Ryk).